A 116-amino-acid polypeptide reads, in one-letter code: Large ribosomal subunit protein uL18 (116 aa).

It belongs to the universal ribosomal protein uL18 family. In terms of assembly, part of the 50S ribosomal subunit; part of the 5S rRNA/L5/L18/L25 subcomplex. Contacts the 5S and 23S rRNAs.

In terms of biological role, this is one of the proteins that bind and probably mediate the attachment of the 5S RNA into the large ribosomal subunit, where it forms part of the central protuberance. In Shewanella amazonensis (strain ATCC BAA-1098 / SB2B), this protein is Large ribosomal subunit protein uL18.